We begin with the raw amino-acid sequence, 339 residues long: Phenylalanine--tRNA ligase alpha subunit (339 aa).

Glutamate 254 serves as a coordination point for Mg(2+).

Belongs to the class-II aminoacyl-tRNA synthetase family. Phe-tRNA synthetase alpha subunit type 1 subfamily. As to quaternary structure, tetramer of two alpha and two beta subunits. It depends on Mg(2+) as a cofactor.

The protein localises to the cytoplasm. It carries out the reaction tRNA(Phe) + L-phenylalanine + ATP = L-phenylalanyl-tRNA(Phe) + AMP + diphosphate + H(+). This is Phenylalanine--tRNA ligase alpha subunit from Dictyoglomus turgidum (strain DSM 6724 / Z-1310).